A 177-amino-acid chain; its full sequence is MNGGHIQLIIGPMFSGKSTELIRRVRRYQIAQYKCVTIKYSNDNRYGTGLWTHDKNNFEALEATKLCDVLEAITDFSVIGIDEGQFFPDIVEFCERMANEGKIVIVAALDGTFQRKPFNNILDLIPLSEMVVKLTAVCMKCFKEASFSKRLGTETKIEIIGGIDMYQSVCRKCYIDS.

11–18 (GPMFSGKS) provides a ligand contact to ATP. The active-site Proton acceptor is the E83. Residue F113 coordinates substrate. The Zn(2+) site is built by C138 and C141. 157 to 161 (IEIIG) is a substrate binding site. C170 and C173 together coordinate Zn(2+).

Belongs to the thymidine kinase family. In terms of assembly, homotetramer. Two molecules of substrate bind to each enzyme tetramer.

The enzyme catalyses thymidine + ATP = dTMP + ADP + H(+). In terms of biological role, phosphorylates thymidine and thymidine analogs, such as azidothymidine (AZT). Part of the salvage pathway for pyrimidine deoxyribonucleotide synthesis. The polypeptide is Thymidine kinase (OPG101) (Variola virus (isolate Human/India/Ind3/1967) (VARV)).